A 120-amino-acid chain; its full sequence is Cell division topological specificity factor (120 aa).

The segment at 93 to 120 (LNSCEGENPQQDPGAAPSEGGHLSSPSP) is disordered.

This sequence belongs to the MinE family.

Prevents the cell division inhibition by proteins MinC and MinD at internal division sites while permitting inhibition at polar sites. This ensures cell division at the proper site by restricting the formation of a division septum at the midpoint of the long axis of the cell. This chain is Cell division topological specificity factor, found in Synechococcus sp. (strain JA-3-3Ab) (Cyanobacteria bacterium Yellowstone A-Prime).